Here is a 217-residue protein sequence, read N- to C-terminus: MIKKVSILNSNFIGVYARTWNDVTFLPVNISDEEKRIFEETLKTEVYKISIGNSFLIGSMLSMNSNGIVVADHGIDNLKSLNINGRNILSINNKLNAAGNNIIANDHAALIHKSFPDSIRKKIEDVLGVETVKGSIAGIKTVGSVAVLNDRGMLVTSEADEDEIKYLSDLFKINVKTGTANFGSNYVGASIIANSNGILVGEATTSIELGRIDDTLS.

It belongs to the eIF-6 family.

In terms of biological role, binds to the 50S ribosomal subunit and prevents its association with the 30S ribosomal subunit to form the 70S initiation complex. In Picrophilus torridus (strain ATCC 700027 / DSM 9790 / JCM 10055 / NBRC 100828 / KAW 2/3), this protein is Translation initiation factor 6.